A 163-amino-acid polypeptide reads, in one-letter code: Putative 4-hydroxy-4-methyl-2-oxoglutarate aldolase (163 aa).

Residues 76 to 79 and Arg-98 each bind substrate; that span reads GDMI. Asp-99 contacts a divalent metal cation.

It belongs to the class II aldolase/RraA-like family. In terms of assembly, homotrimer. It depends on a divalent metal cation as a cofactor.

The enzyme catalyses 4-hydroxy-4-methyl-2-oxoglutarate = 2 pyruvate. It carries out the reaction oxaloacetate + H(+) = pyruvate + CO2. Its function is as follows. Catalyzes the aldol cleavage of 4-hydroxy-4-methyl-2-oxoglutarate (HMG) into 2 molecules of pyruvate. Also contains a secondary oxaloacetate (OAA) decarboxylase activity due to the common pyruvate enolate transition state formed following C-C bond cleavage in the retro-aldol and decarboxylation reactions. This chain is Putative 4-hydroxy-4-methyl-2-oxoglutarate aldolase, found in Pseudomonas fluorescens (strain SBW25).